A 435-amino-acid chain; its full sequence is Adenylosuccinate synthetase (435 aa).

GTP contacts are provided by residues 19 to 25 (GDEGKGK) and 49 to 51 (GHT). D20 acts as the Proton acceptor in catalysis. The Mg(2+) site is built by D20 and G49. IMP-binding positions include 20–23 (DEGK), 47–50 (NAGH), T139, R153, N233, T248, and R312. The active-site Proton donor is the H50. Substrate is bound at residue 308–314 (VTTGRKR). Residues R314, 340–342 (KLD), and 422–424 (GVG) contribute to the GTP site.

It belongs to the adenylosuccinate synthetase family. As to quaternary structure, homodimer. Mg(2+) serves as cofactor.

It is found in the cytoplasm. It carries out the reaction IMP + L-aspartate + GTP = N(6)-(1,2-dicarboxyethyl)-AMP + GDP + phosphate + 2 H(+). Its pathway is purine metabolism; AMP biosynthesis via de novo pathway; AMP from IMP: step 1/2. Plays an important role in the de novo pathway and in the salvage pathway of purine nucleotide biosynthesis. Catalyzes the first committed step in the biosynthesis of AMP from IMP. This chain is Adenylosuccinate synthetase, found in Brugia malayi (Filarial nematode worm).